We begin with the raw amino-acid sequence, 513 residues long: Tyrosine-protein phosphatase non-receptor type substrate 1 (513 aa).

Residues 1-31 (MEPAGPAPGRLGPLLLCLLLSASCFCTGATG) form the signal peptide. Residues 32-137 (KELKVTQPEK…SSEPDTEIQS (106 aa)) form the Ig-like V-type domain. At 32-373 (KELKVTQPEK…PDNNATHNWN (342 aa)) the chain is on the extracellular side. N-linked (GlcNAc...) asparagine glycans are attached at residues asparagine 54, asparagine 92, asparagine 168, asparagine 180, asparagine 205, asparagine 209, asparagine 246, asparagine 271, asparagine 293, asparagine 302, asparagine 312, asparagine 320, asparagine 345, and asparagine 367. A disulfide bridge connects residues cysteine 55 and cysteine 121. 2 Ig-like C1-type domains span residues 149-248 (PSPP…ANLS) and 255-343 (PTVK…PAIT). The cysteines at positions 171 and 229 are disulfide-linked. A disulfide bridge connects residues cysteine 274 and cysteine 332. A helical transmembrane segment spans residues 374-394 (VFIGVGVACALLVVLLMAALY). Residues 395 to 511 (LLRIKQKKAK…FSEYASVQVQ (117 aa)) are Cytoplasmic-facing. Tyrosine 440 bears the Phosphotyrosine; by Tyr-kinases mark. An SH2-binding motif is present at residues 440-443 (YADL). The segment at 444 to 513 (NLPKEKKPAP…EYASVQVQRK (70 aa)) is disordered. The short motif at 450-455 (KPAPRA) is the SH3-binding element. Phosphotyrosine; by Tyr-kinases occurs at positions 464, 481, and 505. Short sequence motifs (SH2-binding) lie at residues 464 to 467 (YASI), 481 to 484 (YADL), and 505 to 508 (YASV). The span at 504 to 513 (EYASVQVQRK) shows a compositional bias: polar residues.

As to quaternary structure, binds PTPN11 when tyrosine-phosphorylated, except in macrophages, where it primarily binds PTPN6. Binds GRB2 vitro. Binds FGR. Binds JAK2 irrespective of its phosphorylation status and forms a stable complex. Binds SCAP1 and/or SCAP2. The resulting complex recruits FYB1. Binds PTK2B. Interacts with TRIM2. N-glycosylated. Post-translationally, phosphorylated on tyrosine residues. Highly expressed in cerebral cortex, brain, spinal cord, cerebellum and spleen, and at much lower levels in kidney, thymus, heart, lung and liver. Within the cerebellum, highly expressed throughout the molecular layer, and in synaptic glomeruli in the granule cell layer. Detected in neurons of the hippocampus and dentate gyrus, and in olfactory bulb. Not detected in Purkinje cells. Highly expressed in the plexiform layers, optic fiber layer and the outer segments of the photoreceptor layer in the retina. Highly expressed in macrophages. Isoform 3 is detected at very low levels in all tissues tested.

Its subcellular location is the membrane. Its function is as follows. Immunoglobulin-like cell surface receptor for CD47. Acts as a docking protein and induces translocation of PTPN6, PTPN11 and other binding partners from the cytosol to the plasma membrane. Supports adhesion of cerebellar neurons, neurite outgrowth and glial cell attachment. May play a key role in intracellular signaling during synaptogenesis and in synaptic function. Involved in the negative regulation of receptor tyrosine kinase-coupled cellular responses induced by cell adhesion, growth factors or insulin. Mediates negative regulation of phagocytosis, mast cell activation and dendritic cell activation. CD47 binding prevents maturation of immature dendritic cells and inhibits cytokine production by mature dendritic cells. Plays a role in antiviral immunity and limits new world arenavirus infection by decreasing virus internalization. Receptor for THBS1. Interaction with THBS1 stimulates phosphorylation of SIRPA. In response to THBS1, involved in ROS signaling in non-phagocytic cells, stimulating NADPH oxidase-derived ROS production. In Mus musculus (Mouse), this protein is Tyrosine-protein phosphatase non-receptor type substrate 1 (Sirpa).